Consider the following 378-residue polypeptide: UPF0754 membrane protein BCG9842_B4423 (378 aa).

The chain crosses the membrane as a helical span at residues 357-377; the sequence is YLGALLGGIIGLVQGLLLLFL.

Belongs to the UPF0754 family.

Its subcellular location is the cell membrane. The polypeptide is UPF0754 membrane protein BCG9842_B4423 (Bacillus cereus (strain G9842)).